The primary structure comprises 479 residues: Sulfate adenylyltransferase subunit 1 (479 aa).

The region spanning 25–239 (KSLLRFLTCG…EVLETVDIQR (215 aa)) is the tr-type G domain. Residues 34 to 41 (GSVDDGKS) form a G1 region. 34–41 (GSVDDGKS) serves as a coordination point for GTP. The tract at residues 92–96 (GITID) is G2. Positions 113-116 (DTPG) are G3. Residues 113–117 (DTPGH) and 168–171 (NKMD) each bind GTP. The interval 168–171 (NKMD) is G4. A G5 region spans residues 206 to 208 (SAL).

This sequence belongs to the TRAFAC class translation factor GTPase superfamily. Classic translation factor GTPase family. CysN/NodQ subfamily. Heterodimer composed of CysD, the smaller subunit, and CysN.

The enzyme catalyses sulfate + ATP + H(+) = adenosine 5'-phosphosulfate + diphosphate. Its pathway is sulfur metabolism; hydrogen sulfide biosynthesis; sulfite from sulfate: step 1/3. In terms of biological role, with CysD forms the ATP sulfurylase (ATPS) that catalyzes the adenylation of sulfate producing adenosine 5'-phosphosulfate (APS) and diphosphate, the first enzymatic step in sulfur assimilation pathway. APS synthesis involves the formation of a high-energy phosphoric-sulfuric acid anhydride bond driven by GTP hydrolysis by CysN coupled to ATP hydrolysis by CysD. The chain is Sulfate adenylyltransferase subunit 1 from Salmonella typhimurium (strain LT2 / SGSC1412 / ATCC 700720).